Reading from the N-terminus, the 88-residue chain is Phosphoribosyl-ATP pyrophosphatase (88 aa).

This sequence belongs to the PRA-PH family.

It localises to the cytoplasm. It catalyses the reaction 1-(5-phospho-beta-D-ribosyl)-ATP + H2O = 1-(5-phospho-beta-D-ribosyl)-5'-AMP + diphosphate + H(+). Its pathway is amino-acid biosynthesis; L-histidine biosynthesis; L-histidine from 5-phospho-alpha-D-ribose 1-diphosphate: step 2/9. The sequence is that of Phosphoribosyl-ATP pyrophosphatase from Cutibacterium acnes (strain DSM 16379 / KPA171202) (Propionibacterium acnes).